A 249-amino-acid polypeptide reads, in one-letter code: CDP-diacylglycerol pyrophosphatase (249 aa).

The helical transmembrane segment at 7–27 threads the bilayer; the sequence is FLLAVVIVAAVAGIGYWKLAA.

It belongs to the Cdh family.

It is found in the cell inner membrane. It catalyses the reaction a CDP-1,2-diacyl-sn-glycerol + H2O = a 1,2-diacyl-sn-glycero-3-phosphate + CMP + 2 H(+). The protein operates within phospholipid metabolism; CDP-diacylglycerol degradation; phosphatidate from CDP-diacylglycerol: step 1/1. This chain is CDP-diacylglycerol pyrophosphatase, found in Citrobacter koseri (strain ATCC BAA-895 / CDC 4225-83 / SGSC4696).